The primary structure comprises 221 residues: Probable septum site-determining protein MinC (221 aa).

This sequence belongs to the MinC family. As to quaternary structure, interacts with MinD and FtsZ.

Functionally, cell division inhibitor that blocks the formation of polar Z ring septums. Rapidly oscillates between the poles of the cell to destabilize FtsZ filaments that have formed before they mature into polar Z rings. Prevents FtsZ polymerization. This Shewanella oneidensis (strain ATCC 700550 / JCM 31522 / CIP 106686 / LMG 19005 / NCIMB 14063 / MR-1) protein is Probable septum site-determining protein MinC.